Consider the following 182-residue polypeptide: Protein GrpE (182 aa).

Positions 1–35 (MTQENQTPPPEQENLAADPAVETTAETPAVKTPEQ) are disordered.

Belongs to the GrpE family. As to quaternary structure, homodimer.

The protein resides in the cytoplasm. Participates actively in the response to hyperosmotic and heat shock by preventing the aggregation of stress-denatured proteins, in association with DnaK and GrpE. It is the nucleotide exchange factor for DnaK and may function as a thermosensor. Unfolded proteins bind initially to DnaJ; upon interaction with the DnaJ-bound protein, DnaK hydrolyzes its bound ATP, resulting in the formation of a stable complex. GrpE releases ADP from DnaK; ATP binding to DnaK triggers the release of the substrate protein, thus completing the reaction cycle. Several rounds of ATP-dependent interactions between DnaJ, DnaK and GrpE are required for fully efficient folding. This is Protein GrpE from Polynucleobacter necessarius subsp. necessarius (strain STIR1).